We begin with the raw amino-acid sequence, 421 residues long: Large ribosomal subunit protein uL4 (421 aa).

Ala2 is modified (N-acetylalanine). At Lys14 the chain carries N6-acetyllysine. At Arg97 the chain carries Omega-N-methylarginine. Lys106 bears the N6-acetyllysine mark. Residue Lys239 forms a Glycyl lysine isopeptide (Lys-Gly) (interchain with G-Cter in SUMO2) linkage. N6-acetyllysine is present on Lys259. Thr266 is subject to Phosphothreonine. Residues Ser290 and Ser295 each carry the phosphoserine modification. Citrulline is present on Arg300. Lys327 participates in a covalent cross-link: Glycyl lysine isopeptide (Lys-Gly) (interchain with G-Cter in SUMO2). Residues Lys333 and Lys353 each carry the N6-acetyllysine modification. Lys364 carries the N6-acetyllysine; alternate modification. Lys364 is covalently cross-linked (Glycyl lysine isopeptide (Lys-Gly) (interchain with G-Cter in SUMO1); alternate). Residue Ser365 is modified to Phosphoserine. The span at 365–379 shows a compositional bias: basic and acidic residues; it reads SEKIVPEKGAGDKKP. A disordered region spans residues 365–421; that stretch reads SEKIVPEKGAGDKKPAVGKKGKKPVDAKKLKKPAGKKVVTKKPAEKKPTTEEKKSAA. Residues 393 to 404 show a composition bias toward basic residues; that stretch reads KLKKPAGKKVVT. Basic and acidic residues predominate over residues 406-421; that stretch reads KPAEKKPTTEEKKSAA.

Belongs to the universal ribosomal protein uL4 family. As to quaternary structure, component of the large ribosomal subunit. May bind IPO9 with low affinity. Interacts with RBM3. Citrullinated by PADI4.

The protein localises to the cytoplasm. Its function is as follows. Component of the large ribosomal subunit. The ribosome is a large ribonucleoprotein complex responsible for the synthesis of proteins in the cell. The protein is Large ribosomal subunit protein uL4 (Rpl4) of Rattus norvegicus (Rat).